The sequence spans 187 residues: ATP-dependent protease subunit HslV (187 aa).

T13 is a catalytic residue. Na(+) contacts are provided by A172, C175, and T178.

The protein belongs to the peptidase T1B family. HslV subfamily. As to quaternary structure, a double ring-shaped homohexamer of HslV is capped on each side by a ring-shaped HslU homohexamer. The assembly of the HslU/HslV complex is dependent on binding of ATP.

Its subcellular location is the cytoplasm. The enzyme catalyses ATP-dependent cleavage of peptide bonds with broad specificity.. Allosterically activated by HslU binding. In terms of biological role, protease subunit of a proteasome-like degradation complex believed to be a general protein degrading machinery. The protein is ATP-dependent protease subunit HslV of Caulobacter sp. (strain K31).